A 329-amino-acid polypeptide reads, in one-letter code: PDZ and LIM domain protein 1 (329 aa).

T2 is subject to N-acetylthreonine. The 83-residue stretch at 3–85 (TQQIDLQGPG…NLTLTVARSE (83 aa)) folds into the PDZ domain. A phosphoserine mark is found at S90 and S130. Position 144 is a phosphotyrosine (Y144). The 60-residue stretch at 258–317 (PMCDKCGTGIVGVFVKLRDRHRHPECYVCTDCGTNLKQKGHFFVEDQIYCEKHARERVTP) folds into the LIM zinc-binding domain. Positions 260, 263, 280, 283, 286, 289, 307, and 310 each coordinate Zn(2+). A Phosphothreonine modification is found at T316. The residue at position 321 (Y321) is a Phosphotyrosine.

In terms of assembly, interacts with ACTN1, ACTN2 and ACTN4. Interacts with PDLIM4. Strongly expressed in the heart and skeletal muscle, moderately expressed in the spleen, small intestine, colon, placenta, and lung. A lower level expression is seen in liver, thymus, kidney, prostate and pancreas and is not found in the brain, testis, ovary, and peripheral blood leukocytes.

It localises to the cytoplasm. The protein localises to the cytoskeleton. The protein resides in the myofibril. It is found in the sarcomere. Its subcellular location is the z line. In terms of biological role, cytoskeletal protein that may act as an adapter that brings other proteins (like kinases) to the cytoskeleton. Involved in assembly, disassembly and directioning of stress fibers in fibroblasts. Required for the localization of ACTN1 and PALLD to stress fibers. Required for cell migration and in maintaining cell polarity of fibroblasts. The protein is PDZ and LIM domain protein 1 (PDLIM1) of Homo sapiens (Human).